Here is a 517-residue protein sequence, read N- to C-terminus: Rop guanine nucleotide exchange factor 9 (517 aa).

2 disordered regions span residues 16-76 and 428-517; these read NLDR…SETE and GEET…KDRH. Over residues 39-63 the composition is skewed to polar residues; that stretch reads MPESQTQDSLGGSPVETSRPMTSRL. The PRONE domain maps to 65–429; it reads SRRQDKQQSE…SLARKQCTGE (365 aa). A compositionally biased stretch (basic and acidic residues) spans 66 to 76; that stretch reads RRQDKQQSETE. Positions 440–452 are enriched in polar residues; the sequence is ETDSASAGSSNYS.

As to quaternary structure, interacts with ARAC11/ROP1 and ARAC10/ROP11. Interacts with PRK6. Expressed in pollen grains and pollen tubes.

The protein resides in the cell membrane. Its function is as follows. Guanine-nucleotide exchange factor (GEF) that acts as an activator of Rop (Rho of plants) GTPases by promoting the exchange of GDP for GTP. In Arabidopsis thaliana (Mouse-ear cress), this protein is Rop guanine nucleotide exchange factor 9.